We begin with the raw amino-acid sequence, 440 residues long: 3-phosphoshikimate 1-carboxyvinyltransferase (440 aa).

Positions 26, 27, and 31 each coordinate 3-phosphoshikimate. K26 is a phosphoenolpyruvate binding site. 2 residues coordinate phosphoenolpyruvate: G99 and R127. The 3-phosphoshikimate site is built by S172, Q174, D320, and K347. A phosphoenolpyruvate-binding site is contributed by Q174. The active-site Proton acceptor is D320. Phosphoenolpyruvate-binding residues include R351 and R392.

The protein belongs to the EPSP synthase family. In terms of assembly, monomer.

It is found in the cytoplasm. The catalysed reaction is 3-phosphoshikimate + phosphoenolpyruvate = 5-O-(1-carboxyvinyl)-3-phosphoshikimate + phosphate. The protein operates within metabolic intermediate biosynthesis; chorismate biosynthesis; chorismate from D-erythrose 4-phosphate and phosphoenolpyruvate: step 6/7. Catalyzes the transfer of the enolpyruvyl moiety of phosphoenolpyruvate (PEP) to the 5-hydroxyl of shikimate-3-phosphate (S3P) to produce enolpyruvyl shikimate-3-phosphate and inorganic phosphate. The protein is 3-phosphoshikimate 1-carboxyvinyltransferase of Xanthomonas euvesicatoria pv. vesicatoria (strain 85-10) (Xanthomonas campestris pv. vesicatoria).